Here is a 473-residue protein sequence, read N- to C-terminus: Photosystem II CP43 reaction center protein (473 aa).

The propeptide occupies 1-14; sequence MKTLYSLRRFYPVE. T15 is modified (N-acetylthreonine). T15 carries the phosphothreonine modification. A run of 5 helical transmembrane segments spans residues 69 to 93, 134 to 155, 178 to 200, 255 to 275, and 291 to 312; these read LFEVAHFVPEKPMYEQGLILLPHLA, LLGPETLEESFPFFGYVWKDRN, KALYFGGVYDTWAPGGGDVRKIT, KPFAWARRALVWSGEAYLSYS, and WFNNTAYPSEFYGPTGPEASQA. Residue E367 participates in [CaMn4O5] cluster binding. The helical transmembrane segment at 447–471 threads the bilayer; it reads RARAAAAGFEKGIDRDFEPVLSMTP.

The protein belongs to the PsbB/PsbC family. PsbC subfamily. PSII is composed of 1 copy each of membrane proteins PsbA, PsbB, PsbC, PsbD, PsbE, PsbF, PsbH, PsbI, PsbJ, PsbK, PsbL, PsbM, PsbT, PsbX, PsbY, PsbZ, Psb30/Ycf12, at least 3 peripheral proteins of the oxygen-evolving complex and a large number of cofactors. It forms dimeric complexes. Binds multiple chlorophylls and provides some of the ligands for the Ca-4Mn-5O cluster of the oxygen-evolving complex. It may also provide a ligand for a Cl- that is required for oxygen evolution. PSII binds additional chlorophylls, carotenoids and specific lipids. is required as a cofactor.

It localises to the plastid. The protein localises to the chloroplast thylakoid membrane. Functionally, one of the components of the core complex of photosystem II (PSII). It binds chlorophyll and helps catalyze the primary light-induced photochemical processes of PSII. PSII is a light-driven water:plastoquinone oxidoreductase, using light energy to abstract electrons from H(2)O, generating O(2) and a proton gradient subsequently used for ATP formation. This is Photosystem II CP43 reaction center protein from Daucus carota (Wild carrot).